A 75-amino-acid chain; its full sequence is Carwaprin-a (75 aa).

An N-terminal signal peptide occupies residues 1-24 (MSSGGLLLLLGLLTLWAELTPISG). The 46-residue stretch at 27 to 72 (RPKKPGLCPPRPQKPPCVRECKNDWRCPGEQKCCRYGCIYECRDPI) folds into the WAP domain. Cystine bridges form between Cys34-Cys60, Cys43-Cys64, Cys47-Cys59, and Cys53-Cys68.

It belongs to the venom waprin family. In terms of tissue distribution, expressed by the venom gland.

It is found in the secreted. Its function is as follows. Damages membranes of susceptible bacteria. Has no hemolytic activity. Not toxic to mice. Does not inhibit the proteinases elastase and cathepsin G. This is Carwaprin-a from Tropidechis carinatus (Australian rough-scaled snake).